The primary structure comprises 253 residues: Ribosome-inactivating protein saporin-7 (253 aa).

Glu-176 is an active-site residue.

It belongs to the ribosome-inactivating protein family. Type 1 RIP subfamily.

It catalyses the reaction Endohydrolysis of the N-glycosidic bond at one specific adenosine on the 28S rRNA.. Functionally, ribosome-inactivating protein of type 1, inhibits protein synthesis in animal cells. This is Ribosome-inactivating protein saporin-7 (SAP7) from Saponaria officinalis (Common soapwort).